The chain runs to 180 residues: Large ribosomal subunit protein uL5 (180 aa).

The protein belongs to the universal ribosomal protein uL5 family. Part of the 50S ribosomal subunit; part of the 5S rRNA/L5/L18/L25 subcomplex. Contacts the 5S rRNA and the P site tRNA. Forms a bridge to the 30S subunit in the 70S ribosome.

Functionally, this is one of the proteins that bind and probably mediate the attachment of the 5S RNA into the large ribosomal subunit, where it forms part of the central protuberance. In the 70S ribosome it contacts protein S13 of the 30S subunit (bridge B1b), connecting the 2 subunits; this bridge is implicated in subunit movement. Contacts the P site tRNA; the 5S rRNA and some of its associated proteins might help stabilize positioning of ribosome-bound tRNAs. The protein is Large ribosomal subunit protein uL5 of Leuconostoc mesenteroides subsp. mesenteroides (strain ATCC 8293 / DSM 20343 / BCRC 11652 / CCM 1803 / JCM 6124 / NCDO 523 / NBRC 100496 / NCIMB 8023 / NCTC 12954 / NRRL B-1118 / 37Y).